A 361-amino-acid polypeptide reads, in one-letter code: sn-glycerol-3-phosphate import ATP-binding protein UgpC (361 aa).

Residues 4–235 (LSLKGVRKSY…PATVFVAGFI (232 aa)) form the ABC transporter domain. 37 to 44 (GPSGCGKS) is an ATP binding site.

Belongs to the ABC transporter superfamily. sn-glycerol-3-phosphate importer (TC 3.A.1.1.3) family. In terms of assembly, the complex is composed of two ATP-binding proteins (UgpC), two transmembrane proteins (UgpA and UgpE) and a solute-binding protein (UgpB).

It localises to the cell inner membrane. The enzyme catalyses sn-glycerol 3-phosphate(out) + ATP + H2O = sn-glycerol 3-phosphate(in) + ADP + phosphate + H(+). In terms of biological role, part of the ABC transporter complex UgpBAEC involved in sn-glycerol-3-phosphate (G3P) import. Responsible for energy coupling to the transport system. The chain is sn-glycerol-3-phosphate import ATP-binding protein UgpC from Burkholderia cenocepacia (strain HI2424).